The primary structure comprises 369 residues: Xylene/toluene monooxygenase hydroxylase component XylM (369 aa).

3 helical membrane passes run 8-28 (LIPVVTACGLIGFYYGGYWVW), 60-80 (LTQYLQLPLMIGLYGLLVFGV), and 91-111 (LQVAGCILSLAWLSGVPTLPV). Fe cation-binding residues include His-113, His-117, His-143, His-147, and His-148. Residues 207–227 (VALLLALPGLVSYLGGPALGL) form a helical membrane-spanning segment. The Fe cation site is built by His-282, His-285, and His-286. Residues 305–325 (MPSLFVCFLLGLIPPLWFALI) traverse the membrane as a helical segment.

The protein belongs to the fatty acid desaturase type 1 family. AlkB subfamily. As to quaternary structure, the xylene/toluene monooxygenase is composed of two subunits: the electron transfer component XylA and the hydroxylase component XylM. Requires Fe(2+) as cofactor.

Its subcellular location is the cell inner membrane. The enzyme catalyses m-xylene + 2 reduced [2Fe-2S]-[ferredoxin] + O2 + 2 H(+) = 3-methylbenzyl alcohol + 2 oxidized [2Fe-2S]-[ferredoxin] + H2O. It catalyses the reaction p-xylene + 2 reduced [2Fe-2S]-[ferredoxin] + O2 + 2 H(+) = 4-methylbenzyl alcohol + 2 oxidized [2Fe-2S]-[ferredoxin] + H2O. The catalysed reaction is toluene + 2 reduced [2Fe-2S]-[ferredoxin] + O2 + 2 H(+) = benzyl alcohol + 2 oxidized [2Fe-2S]-[ferredoxin] + H2O. Functionally, component of a monooxygenase that catalyzes the first step in the degradation of xylenes and toluenes. XylM catalyzes the hydroxylation of the methyl side chain of xylenes and toluenes. The electrons are provided by the electron transfer component XylA. The best substrates are m-xylene and p-xylene, followed by toluene. Shows weak activity with o-xylene. In vitro, is also active with substituted compounds, such as chlorotoluenes. Cannot use benzyl alcohol. The polypeptide is Xylene/toluene monooxygenase hydroxylase component XylM (Pseudomonas putida (Arthrobacter siderocapsulatus)).